The following is a 204-amino-acid chain: ADP-ribosylation factor-like protein 15 (204 aa).

GTP is bound by residues 39 to 46 (GLTGSGKT), 82 to 86 (ELGGA), and 142 to 145 (NHQD).

The protein belongs to the small GTPase superfamily. Arf family.

The polypeptide is ADP-ribosylation factor-like protein 15 (Arl15) (Mus musculus (Mouse)).